A 968-amino-acid polypeptide reads, in one-letter code: RNA polymerase-associated protein RapA (968 aa).

In terms of domain architecture, Helicase ATP-binding spans 164-334; the sequence is DVGRRHAPRV…FARLRLLDPN (171 aa). Position 177–184 (177–184) interacts with ATP; that stretch reads DEVGLGKT. Positions 280-283 match the DEAH box motif; it reads DEAH. In terms of domain architecture, Helicase C-terminal spans 490–685; the sequence is RVEWLMGYLT…ALKAQLEQGR (196 aa).

This sequence belongs to the SNF2/RAD54 helicase family. RapA subfamily. As to quaternary structure, interacts with the RNAP. Has a higher affinity for the core RNAP than for the holoenzyme. Its ATPase activity is stimulated by binding to RNAP.

In terms of biological role, transcription regulator that activates transcription by stimulating RNA polymerase (RNAP) recycling in case of stress conditions such as supercoiled DNA or high salt concentrations. Probably acts by releasing the RNAP, when it is trapped or immobilized on tightly supercoiled DNA. Does not activate transcription on linear DNA. Probably not involved in DNA repair. The protein is RNA polymerase-associated protein RapA of Salmonella choleraesuis (strain SC-B67).